The sequence spans 944 residues: Translation initiation factor IF-2 (944 aa).

Disordered stretches follow at residues 50–91 (SAKT…FAGK) and 114–349 (KVEV…VPAT). 4 stretches are compositionally biased toward basic and acidic residues: residues 75-86 (ESAKKNKEDHPR), 124-157 (VVTE…ETKD), 164-185 (AEVK…EKKK), and 199-233 (KRAE…DNRR). Residues 267–280 (SSGSAPATDSFTPA) are compositionally biased toward polar residues. A compositionally biased stretch (basic and acidic residues) spans 286-307 (SRRDRDRKKSDNNRDNTKDGNR). Polar residues-rich tracts occupy residues 317–331 (NRNQ…NWNQ) and 338–348 (YQNNQSSSVPA). In terms of domain architecture, tr-type G spans 443-614 (ERPAVVTIMG…LLVAEVQELK (172 aa)). Positions 452-459 (GHVDHGKT) are G1. Position 452–459 (452–459 (GHVDHGKT)) interacts with GTP. The G2 stretch occupies residues 477–481 (GITQH). Residues 498–501 (DTPG) form a G3 region. GTP contacts are provided by residues 498–502 (DTPGH) and 552–555 (NKID). Positions 552–555 (NKID) are G4. The segment at 590–592 (SAK) is G5.

The protein belongs to the TRAFAC class translation factor GTPase superfamily. Classic translation factor GTPase family. IF-2 subfamily.

Its subcellular location is the cytoplasm. Its function is as follows. One of the essential components for the initiation of protein synthesis. Protects formylmethionyl-tRNA from spontaneous hydrolysis and promotes its binding to the 30S ribosomal subunits. Also involved in the hydrolysis of GTP during the formation of the 70S ribosomal complex. The polypeptide is Translation initiation factor IF-2 (infB) (Lactococcus lactis subsp. lactis (strain IL1403) (Streptococcus lactis)).